A 220-amino-acid polypeptide reads, in one-letter code: MLRIIDTETCGLQGGIVEIASVDVIDGKIVNPMSHLVRPDRPISPQAMAIHRITEAMVADKPWIEDVIPHYYGSEWYVAHNASFDRRVLPEMPGEWICTMKLARRLWPGIKYSNMALYKTRKLNVQTPPGLHHHRALYDCYITAALLIDIMNTSGWTAEQMADITGRPSLMTTFTFGKYRGKAVSDVAERDPGYLRWLFNNLDSMSPELRLTLKHYLENT.

Requires Mg(2+) as cofactor.

Functionally, capable of degrading both single-strand and double-strand DNA with 3' to 5' polarity. Has higher affinity for ssDNA ends than for dsDNA. This chain is Exodeoxyribonuclease 10 (exoX), found in Escherichia coli O6:H1 (strain CFT073 / ATCC 700928 / UPEC).